A 781-amino-acid polypeptide reads, in one-letter code: Tax1-binding protein 1 homolog A (781 aa).

2 coiled-coil regions span residues 148-453 (NSDI…QGDA) and 488-581 (DVEK…YMRE). Positions 441–465 (KLTQQQETQQGDANRNDASTETTLE) are enriched in polar residues. Disordered regions lie at residues 441 to 510 (KLTQ…EEEC) and 630 to 691 (ETRD…EAPA). Residues 484 to 495 (TVARDVEKSRDE) are compositionally biased toward basic and acidic residues. Residues 496 to 510 (EGNEQEEEDEEEEEC) show a composition bias toward acidic residues. Pro residues predominate over residues 646 to 656 (RPPPLAPPPWG). 2 consecutive UBZ1-type zinc fingers follow at residues 716–742 (HKQC…VESH) and 743–769 (WRVC…VHTH). Positions 719, 722, 738, 742, 746, 749, 765, and 769 each coordinate Zn(2+).

As to expression, little expression is observed during pectoral fin development, except for an elevated level of expression in the distal mesenchyme cells of some samples.

May have anti-apoptotic activity. This Danio rerio (Zebrafish) protein is Tax1-binding protein 1 homolog A.